The sequence spans 289 residues: 4-hydroxy-tetrahydrodipicolinate synthase (289 aa).

Thr-44 serves as a coordination point for pyruvate. Tyr-130 serves as the catalytic Proton donor/acceptor. The active-site Schiff-base intermediate with substrate is Lys-158. Ile-200 serves as a coordination point for pyruvate.

The protein belongs to the DapA family. Homotetramer; dimer of dimers.

The protein localises to the cytoplasm. It catalyses the reaction L-aspartate 4-semialdehyde + pyruvate = (2S,4S)-4-hydroxy-2,3,4,5-tetrahydrodipicolinate + H2O + H(+). Its pathway is amino-acid biosynthesis; L-lysine biosynthesis via DAP pathway; (S)-tetrahydrodipicolinate from L-aspartate: step 3/4. In terms of biological role, catalyzes the condensation of (S)-aspartate-beta-semialdehyde [(S)-ASA] and pyruvate to 4-hydroxy-tetrahydrodipicolinate (HTPA). The sequence is that of 4-hydroxy-tetrahydrodipicolinate synthase from Archaeoglobus fulgidus (strain ATCC 49558 / DSM 4304 / JCM 9628 / NBRC 100126 / VC-16).